The primary structure comprises 329 residues: Ferredoxin--NADP reductase 2 (329 aa).

8 residues coordinate FAD: threonine 18, glutamate 37, glutamine 45, tyrosine 50, valine 90, phenylalanine 124, aspartate 285, and serine 326.

This sequence belongs to the ferredoxin--NADP reductase type 2 family. In terms of assembly, homodimer. It depends on FAD as a cofactor.

It catalyses the reaction 2 reduced [2Fe-2S]-[ferredoxin] + NADP(+) + H(+) = 2 oxidized [2Fe-2S]-[ferredoxin] + NADPH. The polypeptide is Ferredoxin--NADP reductase 2 (Bacillus cytotoxicus (strain DSM 22905 / CIP 110041 / 391-98 / NVH 391-98)).